The primary structure comprises 151 residues: Methylated-DNA--protein-cysteine methyltransferase (151 aa).

The active-site Nucleophile; methyl group acceptor is Cys119.

It belongs to the MGMT family.

Its subcellular location is the cytoplasm. It catalyses the reaction a 6-O-methyl-2'-deoxyguanosine in DNA + L-cysteinyl-[protein] = S-methyl-L-cysteinyl-[protein] + a 2'-deoxyguanosine in DNA. The catalysed reaction is a 4-O-methyl-thymidine in DNA + L-cysteinyl-[protein] = a thymidine in DNA + S-methyl-L-cysteinyl-[protein]. In terms of biological role, involved in the cellular defense against the biological effects of O6-methylguanine (O6-MeG) and O4-methylthymine (O4-MeT) in DNA. Repairs the methylated nucleobase in DNA by stoichiometrically transferring the methyl group to a cysteine residue in the enzyme. This is a suicide reaction: the enzyme is irreversibly inactivated. This chain is Methylated-DNA--protein-cysteine methyltransferase, found in Saccharolobus islandicus (strain L.S.2.15 / Lassen #1) (Sulfolobus islandicus).